A 103-amino-acid polypeptide reads, in one-letter code: Small ribosomal subunit protein uS14c (103 aa).

A disordered region spans residues 34 to 56 (KVSPLSLSEKTKMREKLQSLPRN).

Belongs to the universal ribosomal protein uS14 family. Part of the 30S ribosomal subunit.

The protein resides in the plastid. Its subcellular location is the chloroplast. In terms of biological role, binds 16S rRNA, required for the assembly of 30S particles. The protein is Small ribosomal subunit protein uS14c of Triticum aestivum (Wheat).